Consider the following 233-residue polypeptide: Putative glutathione peroxidase 7, chloroplastic (233 aa).

A chloroplast-targeting transit peptide spans 1–69 (MAFSYASFST…KSKNFSVYAR (69 aa)). C108 is a catalytic residue.

The protein belongs to the glutathione peroxidase family.

The protein resides in the plastid. It localises to the chloroplast. The catalysed reaction is 2 glutathione + H2O2 = glutathione disulfide + 2 H2O. Its function is as follows. May constitute a glutathione peroxidase-like protective system against oxidative stresses. This is Putative glutathione peroxidase 7, chloroplastic (GPX7) from Arabidopsis thaliana (Mouse-ear cress).